A 964-amino-acid polypeptide reads, in one-letter code: Glycine dehydrogenase (decarboxylating) (964 aa).

Positions 1–11 are enriched in polar residues; the sequence is MNSTLQNQTKT. The tract at residues 1–21 is disordered; the sequence is MNSTLQNQTKTNLEKVGTDPL. N6-(pyridoxal phosphate)lysine is present on lysine 713.

This sequence belongs to the GcvP family. In terms of assembly, the glycine cleavage system is composed of four proteins: P, T, L and H. The cofactor is pyridoxal 5'-phosphate.

It carries out the reaction N(6)-[(R)-lipoyl]-L-lysyl-[glycine-cleavage complex H protein] + glycine + H(+) = N(6)-[(R)-S(8)-aminomethyldihydrolipoyl]-L-lysyl-[glycine-cleavage complex H protein] + CO2. In terms of biological role, the glycine cleavage system catalyzes the degradation of glycine. The P protein binds the alpha-amino group of glycine through its pyridoxal phosphate cofactor; CO(2) is released and the remaining methylamine moiety is then transferred to the lipoamide cofactor of the H protein. The sequence is that of Glycine dehydrogenase (decarboxylating) from Leptospira interrogans serogroup Icterohaemorrhagiae serovar copenhageni (strain Fiocruz L1-130).